We begin with the raw amino-acid sequence, 90 residues long: U7-theraphotoxin-Hhn1a 5 (90 aa).

The signal sequence occupies residues 1–19; sequence MKTAIFTVVLALAVFAVLS. A propeptide spanning residues 20 to 50 is cleaved from the precursor; that stretch reads FGWEANEKALSEESTELIHEKEAASETEARE. Intrachain disulfides connect Cys-51–Cys-65, Cys-58–Cys-70, and Cys-64–Cys-81.

This sequence belongs to the neurotoxin 10 (Hwtx-1) family. 13 (Hntx-13) subfamily. In terms of tissue distribution, expressed by the venom gland.

Its subcellular location is the secreted. Functionally, ion channel inhibitor. The sequence is that of U7-theraphotoxin-Hhn1a 5 from Cyriopagopus hainanus (Chinese bird spider).